Reading from the N-terminus, the 265-residue chain is Adenosine 5'-phosphosulfate reductase (265 aa).

The [4Fe-4S] cluster site is built by cysteine 135, cysteine 136, cysteine 218, and cysteine 221. Cysteine 246 functions as the Nucleophile; cysteine thiosulfonate intermediate in the catalytic mechanism.

This sequence belongs to the PAPS reductase family. CysH subfamily. [4Fe-4S] cluster serves as cofactor.

The protein resides in the cytoplasm. The enzyme catalyses [thioredoxin]-disulfide + sulfite + AMP + 2 H(+) = adenosine 5'-phosphosulfate + [thioredoxin]-dithiol. It functions in the pathway sulfur metabolism; hydrogen sulfide biosynthesis; sulfite from sulfate. In terms of biological role, catalyzes the formation of sulfite from adenosine 5'-phosphosulfate (APS) using thioredoxin as an electron donor. In Rhizobium meliloti (strain 1021) (Ensifer meliloti), this protein is Adenosine 5'-phosphosulfate reductase.